A 370-amino-acid chain; its full sequence is Putative glutamate--cysteine ligase 2 (370 aa).

Belongs to the glutamate--cysteine ligase type 2 family. YbdK subfamily.

It catalyses the reaction L-cysteine + L-glutamate + ATP = gamma-L-glutamyl-L-cysteine + ADP + phosphate + H(+). ATP-dependent carboxylate-amine ligase which exhibits weak glutamate--cysteine ligase activity. The protein is Putative glutamate--cysteine ligase 2 of Herminiimonas arsenicoxydans.